The primary structure comprises 409 residues: MSQAPNRLTPFFENIEFERNDGKMILNFGPQHPSAHGQLKLVLELDGEKVVRAMPEVGFMHRGIEKMAENMTYQEFIPVTDRVDYIASVANNYAFCEAVERLCEIKVPRRAQIIRVILLELNRISSHLLFLATHALDIGAMTVFLYAFREREYVLDMIEKYCGARLTHSAVRIGGMPLDLPEGWFEEMLKFCEKFPKDIKIYEDLLSENRIWKMRLENVGVISKELALSSGCSGVMLRASGVKWDIRKEQPYLVYDEIDFEVPYAVAGDCYARYVLYMREMKECVKILKQCERLYRASSREILADAPEFVSPSKEQIMTQNYSLMQHFVLITQGIKPKRGEIYFASESPKGELGIYINSQGEASPYRLKIRTPSFSHCAIYEDLLVGQYIADIAAIIGSTNIILGEVDR.

Belongs to the complex I 49 kDa subunit family. As to quaternary structure, NDH-1 is composed of 14 different subunits. Subunits NuoB, C, D, E, F, and G constitute the peripheral sector of the complex.

Its subcellular location is the cell inner membrane. The catalysed reaction is a quinone + NADH + 5 H(+)(in) = a quinol + NAD(+) + 4 H(+)(out). Functionally, NDH-1 shuttles electrons from NADH, via FMN and iron-sulfur (Fe-S) centers, to quinones in the respiratory chain. The immediate electron acceptor for the enzyme in this species is believed to be ubiquinone. Couples the redox reaction to proton translocation (for every two electrons transferred, four hydrogen ions are translocated across the cytoplasmic membrane), and thus conserves the redox energy in a proton gradient. This is NADH-quinone oxidoreductase subunit D from Campylobacter curvus (strain 525.92).